The following is a 117-amino-acid chain: Hydrogenase maturation factor HypA (117 aa).

Position 2 (His-2) interacts with Ni(2+). Zn(2+)-binding residues include Cys-73, Cys-76, Cys-89, and Cys-92.

It belongs to the HypA/HybF family.

In terms of biological role, involved in the maturation of [NiFe] hydrogenases. Required for nickel insertion into the metal center of the hydrogenase. In Chlorobium luteolum (strain DSM 273 / BCRC 81028 / 2530) (Pelodictyon luteolum), this protein is Hydrogenase maturation factor HypA.